Consider the following 305-residue polypeptide: UDP-N-acetylenolpyruvoylglucosamine reductase (305 aa).

Residues 34–199 enclose the FAD-binding PCMH-type domain; it reads RVGGPAQVLF…TSARFRGEVK (166 aa). Arg-179 is an active-site residue. Ser-228 functions as the Proton donor in the catalytic mechanism. Glu-298 is an active-site residue.

Belongs to the MurB family. It depends on FAD as a cofactor.

Its subcellular location is the cytoplasm. It catalyses the reaction UDP-N-acetyl-alpha-D-muramate + NADP(+) = UDP-N-acetyl-3-O-(1-carboxyvinyl)-alpha-D-glucosamine + NADPH + H(+). It functions in the pathway cell wall biogenesis; peptidoglycan biosynthesis. Its function is as follows. Cell wall formation. This Bradyrhizobium diazoefficiens (strain JCM 10833 / BCRC 13528 / IAM 13628 / NBRC 14792 / USDA 110) protein is UDP-N-acetylenolpyruvoylglucosamine reductase.